The primary structure comprises 474 residues: Tubulin gamma-2 chain (474 aa).

142-148 contributes to the GTP binding site; that stretch reads AGGTGSG.

The protein belongs to the tubulin family. Gamma-tubulin complex is composed of gamma-tubulin and GCP proteins.

It localises to the cytoplasm. The protein localises to the cytoskeleton. The protein resides in the microtubule organizing center. It is found in the nucleus. Its subcellular location is the cell cortex. Functionally, tubulin is the major constituent of microtubules. The gamma chain is found at microtubule organizing centers (MTOC) such as the spindle poles, suggesting that it is involved in the minus-end nucleation of microtubule assembly. Gamma-tubulin complex is essential for the control of microtubular network remodeling in the course of initiation and development of giant-feeding cells, and for the successful reproduction of nematodes (e.g. Meloidogyne spp.) in their plant hosts. This chain is Tubulin gamma-2 chain (TUBG2), found in Arabidopsis thaliana (Mouse-ear cress).